Consider the following 687-residue polypeptide: Auxin response factor 14 (687 aa).

The segment at residues 133–235 (FCKTLTASDT…QLRLGVRRAV (103 aa)) is a DNA-binding region (TF-B3).

It belongs to the ARF family. In terms of assembly, homo and heterodimers. As to expression, expressed in roots, culms, leaves and young panicles.

It is found in the nucleus. Auxin response factors (ARFs) are transcriptional factors that bind specifically to the DNA sequence 5'-TGTCTC-3' found in the auxin-responsive promoter elements (AuxREs). This Oryza sativa subsp. japonica (Rice) protein is Auxin response factor 14 (ARF14).